A 73-amino-acid chain; its full sequence is U3-agatoxin-Ao1i (73 aa).

The first 20 residues, 1–20 (MRTIISLLLLSAMVFAEIEA), serve as a signal peptide directing secretion. The propeptide occupies 21–34 (ISLEEGLQLFEGER). 4 disulfide bridges follow: Cys-36–Cys-52, Cys-43–Cys-57, Cys-51–Cys-67, and Cys-59–Cys-65. Residue Ser-71 is modified to Serine amide.

Belongs to the neurotoxin 07 (Beta/delta-agtx) family. 03 (aga-4) subfamily. Aga sub-subfamily. Expressed by the venom gland.

Its subcellular location is the secreted. Its function is as follows. Insecticidal neurotoxin that induces an irreversible spastic paralysis when injected into insects. Modifies presynaptic voltage-gated sodium channels (Nav), causing them to open at the normal resting potential of the nerve. This leads to spontaneous release of neurotransmitter and repetitive action potentials in motor neurons. The chain is U3-agatoxin-Ao1i from Agelena orientalis (Funnel-web spider).